The sequence spans 179 residues: Large ribosomal subunit protein uL5 (179 aa).

Belongs to the universal ribosomal protein uL5 family. As to quaternary structure, part of the 50S ribosomal subunit; part of the 5S rRNA/L5/L18/L25 subcomplex. Contacts the 5S rRNA and the P site tRNA. Forms a bridge to the 30S subunit in the 70S ribosome.

Its function is as follows. This is one of the proteins that bind and probably mediate the attachment of the 5S RNA into the large ribosomal subunit, where it forms part of the central protuberance. In the 70S ribosome it contacts protein S13 of the 30S subunit (bridge B1b), connecting the 2 subunits; this bridge is implicated in subunit movement. Contacts the P site tRNA; the 5S rRNA and some of its associated proteins might help stabilize positioning of ribosome-bound tRNAs. The sequence is that of Large ribosomal subunit protein uL5 from Geobacillus sp. (strain WCH70).